Consider the following 116-residue polypeptide: Iron-sulfur cluster insertion protein ErpA (116 aa).

Residues cysteine 44, cysteine 108, and cysteine 110 each contribute to the iron-sulfur cluster site.

It belongs to the HesB/IscA family. As to quaternary structure, homodimer. Iron-sulfur cluster serves as cofactor.

In terms of biological role, required for insertion of 4Fe-4S clusters for at least IspG. The chain is Iron-sulfur cluster insertion protein ErpA from Shewanella sp. (strain ANA-3).